The following is a 569-amino-acid chain: Zinc finger and BTB domain-containing protein 7A (569 aa).

Residues 34–101 enclose the BTB domain; the sequence is CDVVILVEGR…AYTATLTVST (68 aa). The disordered stretch occupies residues 214-304; it reads YGPGPPADRP…LSGAAEGEDG (91 aa). Residues 275–569 are mediates interaction with KHDRBS1; sequence EEEAAALSEA…VATAEGNFAT (295 aa). Residues 279–288 are compositionally biased toward low complexity; sequence AALSEAAPEP. A phosphoserine mark is found at Ser-331 and Ser-335. The interval 343–569 is mediates interaction with RELA; the sequence is MDYYLKYFSG…VATAEGNFAT (227 aa). The interval 371–569 is mediates interaction with SMAD4; sequence RAKAFQKCPI…VATAEGNFAT (199 aa). C2H2-type zinc fingers lie at residues 376 to 398 and 404 to 426; these read QKCP…IRTH and YECN…MRKH. A Glycyl lysine isopeptide (Lys-Gly) (interchain with G-Cter in SUMO2) cross-link involves residue Lys-430. The C2H2-type 3 zinc finger occupies 432-454; the sequence is YLCQQCGAAFAHNYDLKNHMRVH. The C2H2-type 4; atypical zinc finger occupies 460-484; that stretch reads YQCDSCCKTFVRSDHLHRHLKKDGC. The disordered stretch occupies residues 480–569; it reads KKDGCNGVPS…VATAEGNFAT (90 aa). Over residues 498–519 the composition is skewed to low complexity; the sequence is RGVPPDVPAGAGAPPGLPDAPR. Residue Lys-527 forms a Glycyl lysine isopeptide (Lys-Gly) (interchain with G-Cter in SUMO2) linkage. Ser-537 bears the Phosphoserine mark. The segment covering 548-557 has biased composition (gly residues); that stretch reads GSGGDDGAGG.

In terms of assembly, homodimer. Interacts with BCL6. Interacts with RELA; involved in the control by RELA of the accessibility of target gene promoters. Interacts with AR (via NR LBD domain); the interaction is direct and androgen-dependent. Interacts with NCOR1. Interacts with NCOR2. Interacts with SMAD4; the interaction is direct and stimulated by TGFB1. Interacts with HDAC1. Interacts with SP1; ZBTB7A prevents the binding to GC-rich motifs in promoters and represses the transcriptional activity of SP1. Interacts with the DNA-dependent protein kinase complex/DNA-PKc. Interacts with KHDRBS1; negatively regulates KHDRBS1 splicing activity. Sumoylated. Undergoes sumoylation with SUMO1 that may regulate its transcriptional activity. Widely expressed. In normal thymus, expressed in medullary epithelial cells and Hassle's corpuscles (at protein level). In the spleen, mainly expressed in the white pulp germinal centers (at protein level). Up-regulated in thymic lymphomas.

Its subcellular location is the nucleus. Transcription factor that represses the transcription of a wide range of genes involved in cell proliferation and differentiation. Directly and specifically binds to the consensus sequence 5'-[GA][CA]GACCCCCCCCC-3' and represses transcription both by regulating the organization of chromatin and through the direct recruitment of transcription factors to gene regulatory regions. Negatively regulates SMAD4 transcriptional activity in the TGF-beta signaling pathway through these two mechanisms. That is, recruits the chromatin regulator HDAC1 to the SMAD4-DNA complex and in parallel prevents the recruitment of the transcriptional activators CREBBP and EP300. Collaborates with transcription factors like RELA to modify the accessibility of gene transcription regulatory regions to secondary transcription factors. Also directly interacts with transcription factors like SP1 to prevent their binding to DNA. Functions as an androgen receptor/AR transcriptional corepressor by recruiting NCOR1 and NCOR2 to the androgen response elements/ARE on target genes. Thereby, negatively regulates androgen receptor signaling and androgen-induced cell proliferation. Involved in the switch between fetal and adult globin expression during erythroid cells maturation. Through its interaction with the NuRD complex regulates chromatin at the fetal globin genes to repress their transcription. Specifically represses the transcription of the tumor suppressor ARF isoform from the CDKN2A gene. Efficiently abrogates E2F1-dependent CDKN2A transactivation. Regulates chondrogenesis through the transcriptional repression of specific genes via a mechanism that also requires histone deacetylation. Regulates cell proliferation through the transcriptional regulation of genes involved in glycolysis. Involved in adipogenesis through the regulation of genes involved in adipocyte differentiation. Plays a key role in the differentiation of lymphoid progenitors into B and T lineages. Promotes differentiation towards the B lineage by inhibiting the T-cell instructive Notch signaling pathway through the specific transcriptional repression of Notch downstream target genes. Also regulates osteoclast differentiation. May also play a role, independently of its transcriptional activity, in double-strand break repair via classical non-homologous end joining/cNHEJ. Recruited to double-strand break sites on damage DNA, interacts with the DNA-dependent protein kinase complex and directly regulates its stability and activity in DNA repair. May also modulate the splicing activity of KHDRBS1 toward BCL2L1 in a mechanism which is histone deacetylase-dependent and thereby negatively regulates the pro-apoptotic effect of KHDRBS1. The polypeptide is Zinc finger and BTB domain-containing protein 7A (Mus musculus (Mouse)).